The chain runs to 489 residues: MTSSSVRVRFCPSPTGIPHVGMVRTALFNWAYARHTGGTFVFRIEDTDAARDSEESYLALLDALRWLGLDWDEGPEVDGPYGPYRQSQRTEIYHDVVAKLLTAGEAYYAFSTPEEVEARHIAAGRNPKLGYDNFDRQLTDSQRAAYLAEGRKPVVRLRMPDTDLAWHDLVRGPTTFAAGSVPDFALTRATGDPLYTLVNPCDDALMKITHVLRGEDLLPSTPRQIALYQALMCIGIAERVPEFAHLPTVLGEETKKLSKRDPQSNLFAHRDRGFIPEGLLNYLALLGWAIADDHDLFSLDEMVAAFDVADVNSNPARFDQKKADAINAEHIRMLDVADFTARLRAYLDTHGHQLALDDAAFAVAAELVQTRIVVLEDAWALLKFLNDDRYAIDPKAAAKELGPDAGPVLDAAIAALDGAADWTTADIEAALKTALIGGMALKPRKAFGPIRVAATGTTVSPPLFESLELLGRERSLGRLRSARDQVGSP.

A 'HIGH' region motif is present at residues 12 to 22; that stretch reads PSPTGIPHVGM. Positions 256-260 match the 'KMSKS' region motif; the sequence is KLSKR. K259 contacts ATP.

Belongs to the class-I aminoacyl-tRNA synthetase family. Glutamate--tRNA ligase type 1 subfamily. In terms of assembly, monomer.

It is found in the cytoplasm. It carries out the reaction tRNA(Glu) + L-glutamate + ATP = L-glutamyl-tRNA(Glu) + AMP + diphosphate. Functionally, catalyzes the attachment of glutamate to tRNA(Glu) in a two-step reaction: glutamate is first activated by ATP to form Glu-AMP and then transferred to the acceptor end of tRNA(Glu). The chain is Glutamate--tRNA ligase from Mycobacterium ulcerans (strain Agy99).